Consider the following 622-residue polypeptide: Chaperone protein HscA homolog (622 aa).

Belongs to the heat shock protein 70 family.

Its function is as follows. Chaperone involved in the maturation of iron-sulfur cluster-containing proteins. Has a low intrinsic ATPase activity which is markedly stimulated by HscB. This is Chaperone protein HscA homolog from Burkholderia lata (strain ATCC 17760 / DSM 23089 / LMG 22485 / NCIMB 9086 / R18194 / 383).